The primary structure comprises 301 residues: Acetylglutamate kinase (301 aa).

Residues 72-73 (GG), Arg-94, and Asn-199 each bind substrate.

Belongs to the acetylglutamate kinase family. ArgB subfamily.

The protein localises to the cytoplasm. It carries out the reaction N-acetyl-L-glutamate + ATP = N-acetyl-L-glutamyl 5-phosphate + ADP. Its pathway is amino-acid biosynthesis; L-arginine biosynthesis; N(2)-acetyl-L-ornithine from L-glutamate: step 2/4. Its function is as follows. Catalyzes the ATP-dependent phosphorylation of N-acetyl-L-glutamate. This is Acetylglutamate kinase from Bartonella henselae (strain ATCC 49882 / DSM 28221 / CCUG 30454 / Houston 1) (Rochalimaea henselae).